The following is an 864-amino-acid chain: Protein translocase subunit SecA (864 aa).

Residues Gln-87, 105–109 (GEGKT), and Asp-494 each bind ATP. The interval 809 to 864 (AKATELRHKEQPAELSYSGGDEDGAKTPSRRNAPKVGRNDPCPCGSGKKYKKCCGA) is disordered. Residues 810–820 (KATELRHKEQP) are compositionally biased toward basic and acidic residues. Residues Cys-850, Cys-852, Cys-861, and Cys-862 each contribute to the Zn(2+) site.

Belongs to the SecA family. In terms of assembly, monomer and homodimer. Part of the essential Sec protein translocation apparatus which comprises SecA, SecYEG and auxiliary proteins SecDF-YajC and YidC. It depends on Zn(2+) as a cofactor.

The protein resides in the cell inner membrane. It localises to the cytoplasm. It catalyses the reaction ATP + H2O + cellular proteinSide 1 = ADP + phosphate + cellular proteinSide 2.. In terms of biological role, part of the Sec protein translocase complex. Interacts with the SecYEG preprotein conducting channel. Has a central role in coupling the hydrolysis of ATP to the transfer of proteins into and across the cell membrane, serving as an ATP-driven molecular motor driving the stepwise translocation of polypeptide chains across the membrane. This Oleidesulfovibrio alaskensis (strain ATCC BAA-1058 / DSM 17464 / G20) (Desulfovibrio alaskensis) protein is Protein translocase subunit SecA.